Consider the following 392-residue polypeptide: Acyl-CoA dehydrogenase IpdE1 (392 aa).

Residues Gln126–Ser129 and Ser171 each bind FAD. Catalysis depends on Glu254, which acts as the Proton acceptor. FAD is bound at residue Ser371 to Glu373.

This sequence belongs to the acyl-CoA dehydrogenase family. In terms of assembly, heterotetramer composed of 2 IpdE1 subunits and 2 IpdE2 subunits. FAD is required as a cofactor.

It catalyses the reaction 3-[(3aS,4S,5R,7aS)-5-hydroxy-7a-methyl-1-oxo-octahydro-1H-inden-4-yl]propanoyl-CoA + A = (2E)-3-[(3aS,4S,5R,7aS)-5-hydroxy-7a-methyl-1-oxo-octahydro-1H-inden-4-yl]prop-2-enoyl-CoA + AH2. Its pathway is steroid metabolism; cholesterol degradation. Functionally, involved in cholesterol degradation. Catalyzes the dehydrogenation of 5OH-HIP-CoA to 5OH-HIPE-CoA. This is Acyl-CoA dehydrogenase IpdE1 from Mycolicibacterium smegmatis (strain ATCC 700084 / mc(2)155) (Mycobacterium smegmatis).